Here is a 330-residue protein sequence, read N- to C-terminus: Ketol-acid reductoisomerase (NADP(+)) (330 aa).

One can recognise a KARI N-terminal Rossmann domain in the interval 1 to 181; it reads MKMYYESDVN…GFTKAGVIET (181 aa). NADP(+) is bound by residues 24–27, R47, S52, and 82–85; these read YGSQ and DEIQ. Residue H107 is part of the active site. G133 serves as a coordination point for NADP(+). Positions 182–327 constitute a KARI C-terminal knotted domain; that stretch reads TFKEETETDL…ERLRKACGLQ (146 aa). D190, E194, E226, and E230 together coordinate Mg(2+). Residue S251 coordinates substrate.

It belongs to the ketol-acid reductoisomerase family. It depends on Mg(2+) as a cofactor.

The enzyme catalyses (2R)-2,3-dihydroxy-3-methylbutanoate + NADP(+) = (2S)-2-acetolactate + NADPH + H(+). It carries out the reaction (2R,3R)-2,3-dihydroxy-3-methylpentanoate + NADP(+) = (S)-2-ethyl-2-hydroxy-3-oxobutanoate + NADPH + H(+). It functions in the pathway amino-acid biosynthesis; L-isoleucine biosynthesis; L-isoleucine from 2-oxobutanoate: step 2/4. Its pathway is amino-acid biosynthesis; L-valine biosynthesis; L-valine from pyruvate: step 2/4. Involved in the biosynthesis of branched-chain amino acids (BCAA). Catalyzes an alkyl-migration followed by a ketol-acid reduction of (S)-2-acetolactate (S2AL) to yield (R)-2,3-dihydroxy-isovalerate. In the isomerase reaction, S2AL is rearranged via a Mg-dependent methyl migration to produce 3-hydroxy-3-methyl-2-ketobutyrate (HMKB). In the reductase reaction, this 2-ketoacid undergoes a metal-dependent reduction by NADPH to yield (R)-2,3-dihydroxy-isovalerate. This chain is Ketol-acid reductoisomerase (NADP(+)), found in Methanobrevibacter smithii (strain ATCC 35061 / DSM 861 / OCM 144 / PS).